The following is a 264-amino-acid chain: Transcription initiation factor TFIID subunit 9 (264 aa).

K5 carries the post-translational modification N6-acetyllysine. Phosphoserine is present on residues S149, S152, S155, and S158. The tract at residues 150–174 (VGSVSSRPSTPTLGTPTPQAMSVST) is disordered. A compositionally biased stretch (polar residues) spans 151 to 174 (GSVSSRPSTPTLGTPTPQAMSVST). Residues T159, T161, T164, and T178 each carry the phosphothreonine modification. Phosphoserine is present on residues S181 and S196. The tract at residues 233–264 (QNTANESANALKRKREEEDDDDDDDDDDYDNL) is disordered. Over residues 249–264 (EEDDDDDDDDDDYDNL) the composition is skewed to acidic residues.

The protein belongs to the TAF9 family. As to quaternary structure, component of the TFIID basal transcription factor complex, composed of TATA-box-binding protein TBP, and a number of TBP-associated factors (TAFs), including TAF1, TAF2, TAF3, TAF4, TAF5, TAF6, TAF7, TAF8, TAF9, TAF10, TAF11, TAF12 and TAF13. Component of the TATA-binding protein-free TAF complex (TFTC), the PCAF histone acetylase complex and the STAGA transcription coactivator-HAT complex. The PCAF complex consists at least of TADA2L/ADA2, SUPT3H/SPT3, TADA3L/ADA3, TAF5L/PAF65-beta, TAF6L/PAF65-alpha, TAF10/TAFII30, TAF12/TAFII20, TAF9/TAFII31 and TRRAP. The STAGA transcription coactivator-HAT complex consists at least of SUPT3H, GCN5L2, SUPT7L, TAF5L, TAF6L, TADA3L, TAD1L, TAF10, TAF12, TRRAP and TAF9. Binds N-terminal domain of p53/TP53 which is essential for transcription. Component of some MLL1/MLL complex, at least composed of the core components KMT2A/MLL1, ASH2L, HCFC1/HCF1, WDR5 and RBBP5, as well as the facultative components BACC1, CHD8, E2F6, HSP70, INO80C, KANSL1, LAS1L, MAX, MCRS1, MGA, MYST1/MOF, PELP1, PHF20, PRP31, RING2, RUVB1/TIP49A, RUVB2/TIP49B, SENP3, TAF1, TAF4, TAF6, TAF7, TAF9 and TEX10. Binds TFIIB and the Herpes simplex virus activator VP16. Forms a heterodimer with TAF6 in a complex with the TAF4B-TAF12 heterodimer. Also interacts with TAF5. Binds directly DNA. Increased DNA binding when complexed with TAF6.

It localises to the nucleus. Functionally, the TFIID basal transcription factor complex plays a major role in the initiation of RNA polymerase II (Pol II)-dependent transcription. TFIID recognizes and binds promoters with or without a TATA box via its subunit TBP, a TATA-box-binding protein, and promotes assembly of the pre-initiation complex (PIC). The TFIID complex consists of TBP and TBP-associated factors (TAFs), including TAF1, TAF2, TAF3, TAF4, TAF5, TAF6, TAF7, TAF8, TAF9, TAF10, TAF11, TAF12 and TAF13. TAF9 is also a component of the TBP-free TAFII complex (TFTC), the PCAF histone acetylase complex and the STAGA transcription coactivator-HAT complex. TAF9 and its paralog TAF9B are involved in transcriptional activation as well as repression of distinct but overlapping sets of genes. Essential for cell viability. May have a role in gene regulation associated with apoptosis. This chain is Transcription initiation factor TFIID subunit 9, found in Rattus norvegicus (Rat).